The chain runs to 301 residues: Prestalk A differentiation protein A (301 aa).

The protein belongs to the NmrA-type oxidoreductase family.

Functionally, involved in development and cell differentiation. This is Prestalk A differentiation protein A (padA) from Dictyostelium discoideum (Social amoeba).